A 776-amino-acid polypeptide reads, in one-letter code: MKCPKILAALLGCAVLAGVPAMPAHAAINSMSLGASYDAQQANITFRVYSSQATRIVLYLYSAGYGVQESATYTLSPAGSGVWAVTVPVSSIKAAGITGAVYYGYRAWGPNWPYASNWGKGSQAGFVSDVDANGDRFNPNKLLLDPYAQEVSQDPLNPSNQNGNVFASGASYRTTDSGIYAPKGVVLVPSTQSTGTKPTRAQKDDVIYEVHVRGFTEQDTSIPAQYRGTYYGAGLKASYLASLGVTAVEFLPVQETQNDANDVVPNSDANQNYWGYMTENYFSPDRRYAYNKAAGGPTAEFQAMVQAFHNAGIKVYMDVVYNHTAEGGTWTSSDPTTATIYSWRGLDNTTYYELTSGNQYFYDNTGIGANFNTYNTVAQNLIVDSLAYWANTMGVDGFRFDLASVLGNSCLNGAYTASAPNCPNGGYNFDAADSNVAINRILREFTVRPAAGGSGLDLFAEPWAIGGNSYQLGGFPQGWSEWNGLFRDSLRQAQNELGSMTIYVTQDANDFSGSSNLFQSSGRSPWNSINFIDVHDGMTLKDVYSCNGANNSQAWPYGPSDGGTSTNYSWDQGMSAGTGAAVDQRRAARTGMAFEMLSAGTPLMQGGDEYLRTLQCNNNAYNLDSSANWLTYSWTTDQSNFYTFAQRLIAFRKAHPALRPSSWYSGSQLTWYQPSGAVADSNYWNNTSNYAIAYAINGPSLGDSNSIYVAYNGWSSSVTFTLPAPPSGTQWYRVTDTCDWNDGASTFVAPGSETLIGGAGTTYGQCGQSLLLLISK.

The signal sequence occupies residues 1–26 (MKCPKILAALLGCAVLAGVPAMPAHA). Asp-154, Glu-255, Thr-256, Asn-258, and Asp-285 together coordinate Ca(2+). Asp-401 serves as the catalytic Nucleophile. The cysteines at positions 410 and 422 are disulfide-linked. Glu-461 acts as the Proton donor in catalysis. 2 disulfide bridges follow: Cys-546-Cys-616 and Cys-738-Cys-766.

This sequence belongs to the glycosyl hydrolase 13 family. In terms of assembly, monomer. Ca(2+) serves as cofactor.

The catalysed reaction is Hydrolysis of (1-&gt;6)-alpha-D-glucosidic branch linkages in glycogen, amylopectin and their beta-limit dextrins.. The chain is Isoamylase (iam) from Pseudomonas sp. (strain SMP1).